The primary structure comprises 440 residues: Glycerol-3-phosphate dehydrogenase [NAD(+)], chloroplastic (440 aa).

Residues 1 to 47 (MAAAAAATFLPHTPTPRRRLAVAVHSPTRRRLSLVFSGPPDGALSVA) constitute a chloroplast transit peptide. The tract at residues 57 to 76 (EEAAAAVSAPRGGGGGGGKE) is disordered. Residues 114-119 (GGGSFG), phenylalanine 191, lysine 214, and alanine 248 contribute to the NAD(+) site. Residue lysine 214 coordinates substrate. Lysine 299 functions as the Proton acceptor in the catalytic mechanism. Residues arginine 363 and glutamate 389 each coordinate NAD(+). 363–364 (RN) lines the substrate pocket.

It belongs to the NAD-dependent glycerol-3-phosphate dehydrogenase family.

Its subcellular location is the plastid. It is found in the chloroplast. It catalyses the reaction sn-glycerol 3-phosphate + NAD(+) = dihydroxyacetone phosphate + NADH + H(+). The protein operates within membrane lipid metabolism; glycerophospholipid metabolism. Its function is as follows. Required to supply glycerol-3-phosphate in the chloroplast for the synthesis of glycerolipids. This chain is Glycerol-3-phosphate dehydrogenase [NAD(+)], chloroplastic, found in Oryza sativa subsp. japonica (Rice).